The sequence spans 88 residues: Small ribosomal subunit protein uS17 (88 aa).

It belongs to the universal ribosomal protein uS17 family. As to quaternary structure, part of the 30S ribosomal subunit.

Functionally, one of the primary rRNA binding proteins, it binds specifically to the 5'-end of 16S ribosomal RNA. The polypeptide is Small ribosomal subunit protein uS17 (Teredinibacter turnerae (strain ATCC 39867 / T7901)).